A 616-amino-acid chain; its full sequence is Dihydroxy-acid dehydratase (616 aa).

D81 provides a ligand contact to Mg(2+). C122 contacts [2Fe-2S] cluster. Residues D123 and K124 each coordinate Mg(2+). Position 124 is an N6-carboxylysine (K124). A [2Fe-2S] cluster-binding site is contributed by C195. Mg(2+) is bound at residue E491. Residue S517 is the Proton acceptor of the active site.

The protein belongs to the IlvD/Edd family. Homodimer. It depends on [2Fe-2S] cluster as a cofactor. Mg(2+) is required as a cofactor.

The enzyme catalyses (2R)-2,3-dihydroxy-3-methylbutanoate = 3-methyl-2-oxobutanoate + H2O. The catalysed reaction is (2R,3R)-2,3-dihydroxy-3-methylpentanoate = (S)-3-methyl-2-oxopentanoate + H2O. The protein operates within amino-acid biosynthesis; L-isoleucine biosynthesis; L-isoleucine from 2-oxobutanoate: step 3/4. Its pathway is amino-acid biosynthesis; L-valine biosynthesis; L-valine from pyruvate: step 3/4. Its function is as follows. Functions in the biosynthesis of branched-chain amino acids. Catalyzes the dehydration of (2R,3R)-2,3-dihydroxy-3-methylpentanoate (2,3-dihydroxy-3-methylvalerate) into 2-oxo-3-methylpentanoate (2-oxo-3-methylvalerate) and of (2R)-2,3-dihydroxy-3-methylbutanoate (2,3-dihydroxyisovalerate) into 2-oxo-3-methylbutanoate (2-oxoisovalerate), the penultimate precursor to L-isoleucine and L-valine, respectively. The sequence is that of Dihydroxy-acid dehydratase from Escherichia coli (strain 55989 / EAEC).